Here is a 180-residue protein sequence, read N- to C-terminus: Large ribosomal subunit protein uL5 (180 aa).

This sequence belongs to the universal ribosomal protein uL5 family. As to quaternary structure, part of the 50S ribosomal subunit; part of the 5S rRNA/L5/L18/L25 subcomplex. Contacts the 5S rRNA and the P site tRNA. Forms a bridge to the 30S subunit in the 70S ribosome.

Its function is as follows. This is one of the proteins that bind and probably mediate the attachment of the 5S RNA into the large ribosomal subunit, where it forms part of the central protuberance. In the 70S ribosome it contacts protein S13 of the 30S subunit (bridge B1b), connecting the 2 subunits; this bridge is implicated in subunit movement. Contacts the P site tRNA; the 5S rRNA and some of its associated proteins might help stabilize positioning of ribosome-bound tRNAs. The chain is Large ribosomal subunit protein uL5 from Anaeromyxobacter dehalogenans (strain 2CP-1 / ATCC BAA-258).